Here is a 397-residue protein sequence, read N- to C-terminus: Riboflavin biosynthesis protein RibBA (397 aa).

The tract at residues 1–199 (MFHRIEEALE…IEDLIAYRRH (199 aa)) is DHBP synthase. Residues 26–27 (RE), aspartate 31, 138–142 (RAGHT), and glutamate 162 each bind D-ribulose 5-phosphate. Glutamate 27 is a Mg(2+) binding site. Histidine 141 serves as a coordination point for Mg(2+). The GTP cyclohydrolase II stretch occupies residues 200-397 (HETLVTREVE…VNKLGHLLNL (198 aa)). 250-254 (RVHSE) is a GTP binding site. Zn(2+) contacts are provided by cysteine 255, cysteine 266, and cysteine 268. Residues glutamine 271, 293 to 295 (EGR), and threonine 315 contribute to the GTP site. Residue aspartate 327 is the Proton acceptor; for GTP cyclohydrolase activity of the active site. The Nucleophile; for GTP cyclohydrolase activity role is filled by arginine 329. Positions 350 and 355 each coordinate GTP.

In the N-terminal section; belongs to the DHBP synthase family. This sequence in the C-terminal section; belongs to the GTP cyclohydrolase II family. Requires Mg(2+) as cofactor. The cofactor is Mn(2+). It depends on Zn(2+) as a cofactor.

The enzyme catalyses D-ribulose 5-phosphate = (2S)-2-hydroxy-3-oxobutyl phosphate + formate + H(+). It catalyses the reaction GTP + 4 H2O = 2,5-diamino-6-hydroxy-4-(5-phosphoribosylamino)-pyrimidine + formate + 2 phosphate + 3 H(+). Its pathway is cofactor biosynthesis; riboflavin biosynthesis; 2-hydroxy-3-oxobutyl phosphate from D-ribulose 5-phosphate: step 1/1. It functions in the pathway cofactor biosynthesis; riboflavin biosynthesis; 5-amino-6-(D-ribitylamino)uracil from GTP: step 1/4. Catalyzes the conversion of D-ribulose 5-phosphate to formate and 3,4-dihydroxy-2-butanone 4-phosphate. Functionally, catalyzes the conversion of GTP to 2,5-diamino-6-ribosylamino-4(3H)-pyrimidinone 5'-phosphate (DARP), formate and pyrophosphate. In Bacillus cereus (strain AH187), this protein is Riboflavin biosynthesis protein RibBA.